The sequence spans 524 residues: Ribose import ATP-binding protein RbsA (524 aa).

ABC transporter domains follow at residues 17–252 (LQLD…GRSI) and 263–505 (IGQP…VSQV). An ATP-binding site is contributed by 49 to 56 (GENGAGKS).

Belongs to the ABC transporter superfamily. Ribose importer (TC 3.A.1.2.1) family. In terms of assembly, the complex is composed of an ATP-binding protein (RbsA), two transmembrane proteins (RbsC) and a solute-binding protein (RbsB).

It localises to the cell membrane. It carries out the reaction D-ribose(out) + ATP + H2O = D-ribose(in) + ADP + phosphate + H(+). In terms of biological role, part of the ABC transporter complex RbsABC involved in ribose import. Responsible for energy coupling to the transport system. This Corynebacterium glutamicum (strain ATCC 13032 / DSM 20300 / JCM 1318 / BCRC 11384 / CCUG 27702 / LMG 3730 / NBRC 12168 / NCIMB 10025 / NRRL B-2784 / 534) protein is Ribose import ATP-binding protein RbsA.